Here is a 341-residue protein sequence, read N- to C-terminus: HTH-type transcriptional repressor PurR (341 aa).

An HTH lacI-type domain is found at A2 to V56. The segment at residues I4–N23 is a DNA-binding region (H-T-H motif). Residues S48–V56 mediate DNA binding. Hypoxanthine-binding residues include Y73, R190, T192, F221, and D275.

As to quaternary structure, homodimer.

Its pathway is purine metabolism; purine nucleotide biosynthesis [regulation]. In terms of biological role, is the main repressor of the genes involved in the de novo synthesis of purine nucleotides, regulating purB, purC, purEK, purF, purHD, purL, purMN and guaBA expression. PurR is allosterically activated to bind its cognate DNA by binding the purine corepressors, hypoxanthine or guanine, thereby effecting transcription repression. This chain is HTH-type transcriptional repressor PurR, found in Yersinia enterocolitica serotype O:8 / biotype 1B (strain NCTC 13174 / 8081).